A 93-amino-acid polypeptide reads, in one-letter code: DNA-directed RNA polymerase subunit Rpo11 (93 aa).

The protein belongs to the archaeal Rpo11/eukaryotic RPB11/RPC19 RNA polymerase subunit family. As to quaternary structure, part of the RNA polymerase complex.

It localises to the cytoplasm. The catalysed reaction is RNA(n) + a ribonucleoside 5'-triphosphate = RNA(n+1) + diphosphate. Its function is as follows. DNA-dependent RNA polymerase (RNAP) catalyzes the transcription of DNA into RNA using the four ribonucleoside triphosphates as substrates. This chain is DNA-directed RNA polymerase subunit Rpo11, found in Methanocella arvoryzae (strain DSM 22066 / NBRC 105507 / MRE50).